The sequence spans 513 residues: Cytochrome P450 monooxygenase eqxH (513 aa).

A helical transmembrane segment spans residues 13 to 32; sequence QYAILCGITVFTLFIVQLSL. 2 N-linked (GlcNAc...) asparagine glycosylation sites follow: Asn-130 and Asn-295. Residue Cys-449 coordinates heme.

The protein belongs to the cytochrome P450 family. Heme is required as a cofactor.

It localises to the membrane. Its pathway is mycotoxin biosynthesis. Cytochrome P450 monooxygenase; part of the gene cluster that mediates the biosynthesis of equisetin, a trans-fused decalin-containing tetramic acid with antimicrobial activity. The PKS module of eqxS together with the enoylreductase eqxC catalyze the formation of the polyketide unit which is then conjugated to L-serine by the condensation domain of the eqxS NRPS module. Activity of the Dieckmann cyclase domain (RED) results in release of the Dieckmann product intermediate. Diels-Alderase eqx3 is involved in endo-selective Diels-Alder cycloaddition to form the decalin ring, leading to the production of N-desmethylequisetin also called trichosetin. Subsequent N-methylation is carried out by eqxD to give equisetin. This is Cytochrome P450 monooxygenase eqxH from Fusarium heterosporum.